The sequence spans 466 residues: Adenosylhomocysteinase (466 aa).

Substrate contacts are provided by Thr-57, Asp-132, and Glu-192. Thr-193–Thr-195 serves as a coordination point for NAD(+). Residues Lys-222 and Asp-226 each coordinate substrate. NAD(+) contacts are provided by residues Asn-227, Gly-256 to Gly-261, Glu-279, Asn-314, Ile-335 to His-337, and Asn-380.

Belongs to the adenosylhomocysteinase family. The cofactor is NAD(+).

Its subcellular location is the cytoplasm. It carries out the reaction S-adenosyl-L-homocysteine + H2O = L-homocysteine + adenosine. It functions in the pathway amino-acid biosynthesis; L-homocysteine biosynthesis; L-homocysteine from S-adenosyl-L-homocysteine: step 1/1. Functionally, may play a key role in the regulation of the intracellular concentration of adenosylhomocysteine. The polypeptide is Adenosylhomocysteinase (Rhizobium etli (strain CIAT 652)).